The sequence spans 192 residues: Fe/S biogenesis protein NfuA (192 aa).

The [4Fe-4S] cluster site is built by Cys149 and Cys152.

It belongs to the NfuA family. Homodimer. The cofactor is [4Fe-4S] cluster.

Involved in iron-sulfur cluster biogenesis. Binds a 4Fe-4S cluster, can transfer this cluster to apoproteins, and thereby intervenes in the maturation of Fe/S proteins. Could also act as a scaffold/chaperone for damaged Fe/S proteins. The protein is Fe/S biogenesis protein NfuA of Tolumonas auensis (strain DSM 9187 / NBRC 110442 / TA 4).